The chain runs to 177 residues: Adenine phosphoribosyltransferase (177 aa).

Belongs to the purine/pyrimidine phosphoribosyltransferase family. As to quaternary structure, homodimer.

It is found in the cytoplasm. It catalyses the reaction AMP + diphosphate = 5-phospho-alpha-D-ribose 1-diphosphate + adenine. It functions in the pathway purine metabolism; AMP biosynthesis via salvage pathway; AMP from adenine: step 1/1. Functionally, catalyzes a salvage reaction resulting in the formation of AMP, that is energically less costly than de novo synthesis. The chain is Adenine phosphoribosyltransferase from Chlorobium phaeobacteroides (strain BS1).